The primary structure comprises 172 residues: NADH-quinone oxidoreductase subunit B (172 aa).

[4Fe-4S] cluster is bound by residues cysteine 46, cysteine 47, cysteine 111, and cysteine 141.

Belongs to the complex I 20 kDa subunit family. In terms of assembly, NDH-1 is composed of 14 different subunits. Subunits NuoB, C, D, E, F, and G constitute the peripheral sector of the complex. It depends on [4Fe-4S] cluster as a cofactor.

The protein localises to the cell membrane. It catalyses the reaction a quinone + NADH + 5 H(+)(in) = a quinol + NAD(+) + 4 H(+)(out). In terms of biological role, NDH-1 shuttles electrons from NADH, via FMN and iron-sulfur (Fe-S) centers, to quinones in the respiratory chain. The immediate electron acceptor for the enzyme in this species is believed to be a menaquinone. Couples the redox reaction to proton translocation (for every two electrons transferred, four hydrogen ions are translocated across the cytoplasmic membrane), and thus conserves the redox energy in a proton gradient. The sequence is that of NADH-quinone oxidoreductase subunit B from Bacillus cereus (strain G9842).